Reading from the N-terminus, the 116-residue chain is Somatostatin (116 aa).

The first 24 residues, Met-1–Cys-24, serve as a signal peptide directing secretion. A propeptide spanning residues Ala-25–Arg-88 is cleaved from the precursor. Ala-43 bears the Alanine amide mark. A disordered region spans residues Gln-62–Arg-99. A disulfide bond links Cys-105 and Cys-116.

This sequence belongs to the somatostatin family. C-terminal amidation of the neuronostatin peptide is required for its biological activity, including for the regulation of mean arterial pressure.

The protein localises to the secreted. In terms of biological role, inhibits the secretion of pituitary hormones, including that of growth hormone/somatotropin (GH1), PRL, ACTH, luteinizing hormone (LH) and TSH. Also impairs ghrelin- and GnRH-stimulated secretion of GH1 and LH; the inhibition of ghrelin-stimulated secretion of GH1 can be further increased by neuronostatin. May enhance low-glucose-induced glucagon release by pancreatic alpha cells. This effect may be mediated by binding to GPR107 and PKA activation. May regulate cardiac contractile function. May compromise cardiomyocyte viability. In the central nervous system, may impair memory retention and may affect hippocampal excitability. May also have anxiolytic and anorexigenic effects. May play a role in arterial pressure regulation. May inhibit basal, but not ghrelin- or GnRH-stimulated secretion of GH1 or LH, but does not affect the release of other pituitary hormones, including PRL, ACTH, FSH or TSH. Potentiates inhibitory action of somatostatin on ghrelin-stimulated secretion of GH1, but not that on GnRH-stimulated secretion of LH. This chain is Somatostatin (SST), found in Canis lupus familiaris (Dog).